A 496-amino-acid chain; its full sequence is Glycerol kinase (496 aa).

Residue T12 participates in ADP binding. ATP is bound by residues T12, T13, and S14. T12 contacts sn-glycerol 3-phosphate. Residue R16 participates in ADP binding. 3 residues coordinate sn-glycerol 3-phosphate: R82, E83, and Y134. Glycerol-binding residues include R82, E83, and Y134. H230 bears the Phosphohistidine; by HPr mark. Sn-glycerol 3-phosphate is bound at residue D244. Residues D244 and Q245 each coordinate glycerol. T266 and G309 together coordinate ADP. 4 residues coordinate ATP: T266, G309, Q313, and G410. The ADP site is built by G410 and N414.

This sequence belongs to the FGGY kinase family. As to quaternary structure, homotetramer and homodimer (in equilibrium). The phosphoenolpyruvate-dependent sugar phosphotransferase system (PTS), including enzyme I, and histidine-containing protein (HPr) are required for the phosphorylation, which leads to the activation of the enzyme.

It carries out the reaction glycerol + ATP = sn-glycerol 3-phosphate + ADP + H(+). Its pathway is polyol metabolism; glycerol degradation via glycerol kinase pathway; sn-glycerol 3-phosphate from glycerol: step 1/1. Its activity is regulated as follows. Activated by phosphorylation and inhibited by fructose 1,6-bisphosphate (FBP). In terms of biological role, key enzyme in the regulation of glycerol uptake and metabolism. Catalyzes the phosphorylation of glycerol to yield sn-glycerol 3-phosphate. The protein is Glycerol kinase of Bacillus licheniformis (strain ATCC 14580 / DSM 13 / JCM 2505 / CCUG 7422 / NBRC 12200 / NCIMB 9375 / NCTC 10341 / NRRL NRS-1264 / Gibson 46).